The sequence spans 335 residues: AA9 family lytic polysaccharide monooxygenase A (335 aa).

Residues 1–21 form the signal peptide; it reads MSSFITKTVLAALVAAAGVRA. Cu(2+) contacts are provided by His-22 and His-107. A disulfide bond links Cys-77 and Cys-196. 2 residues coordinate O2: His-182 and Gln-191. Tyr-193 lines the Cu(2+) pocket. The disordered stretch occupies residues 241-335; the sequence is PKMNIAGGSS…ARRHARDMMN (95 aa). A compositionally biased stretch (low complexity) spans 251 to 303; the sequence is GAAPSTPATPTTGSGSDTPSNTAAPVESAPAESAAPVESAPAAGNGNQNNGGA. A compositionally biased stretch (basic residues) spans 321 to 335; that stretch reads CKAKKARRHARDMMN.

This sequence belongs to the polysaccharide monooxygenase AA9 family. Requires Cu(2+) as cofactor.

The protein localises to the secreted. It catalyses the reaction [(1-&gt;4)-beta-D-glucosyl]n+m + reduced acceptor + O2 = 4-dehydro-beta-D-glucosyl-[(1-&gt;4)-beta-D-glucosyl]n-1 + [(1-&gt;4)-beta-D-glucosyl]m + acceptor + H2O.. Its function is as follows. Lytic polysaccharide monooxygenase (LPMO) that depolymerizes crystalline and amorphous polysaccharides via the oxidation of scissile alpha- or beta-(1-4)-glycosidic bonds, yielding C1 or C4 oxidation products. Catalysis by LPMOs requires the reduction of the active-site copper from Cu(II) to Cu(I) by a reducing agent and H(2)O(2) or O(2) as a cosubstrate. Is capable of cleaving cellulose, but not chitin. Is also active on tamarind xyloglucan and longer xyloglucan oligosaccharides. Has no activity toward shorter cellooligosaccharides (Glc3-6), as well as toward the xyloglucan-heptamer, birchwood xylan, wheat arabinoxylan, konjac glucomannan, ivory nut mannan, beta-glucan from barley, lichenan from Icelandic moss, starch, and spruce galactoglucomannan. Has unprecedented broad specificity on xyloglucan, cleaving any glycosidicbond in theb-glucan main chain, regardless of xylosyl substitutions. When incubated with a mixture of xyloglucan and cellulose, efficiently attacks the xyloglucan, whereas cellulose conversion is inhibited, suggesting that removal of hemicellulose may be the true function of this LPMO during biomass conversion. In Gibberella zeae (strain ATCC MYA-4620 / CBS 123657 / FGSC 9075 / NRRL 31084 / PH-1) (Wheat head blight fungus), this protein is AA9 family lytic polysaccharide monooxygenase A.